We begin with the raw amino-acid sequence, 118 residues long: Large ribosomal subunit protein bL20 (118 aa).

It belongs to the bacterial ribosomal protein bL20 family.

In terms of biological role, binds directly to 23S ribosomal RNA and is necessary for the in vitro assembly process of the 50S ribosomal subunit. It is not involved in the protein synthesizing functions of that subunit. This is Large ribosomal subunit protein bL20 from Ectopseudomonas mendocina (strain ymp) (Pseudomonas mendocina).